Reading from the N-terminus, the 234-residue chain is Sugar fermentation stimulation protein homolog (234 aa).

Belongs to the SfsA family.

This chain is Sugar fermentation stimulation protein homolog, found in Photobacterium profundum (strain SS9).